The primary structure comprises 501 residues: Zinc finger protein PLAG1 (501 aa).

The segment at 1–30 (MATVIPGDLSEVRDTQKVPSGKRKRGETKP) is disordered. The Nuclear localization signal signature appears at 22 to 25 (KRKR). 7 C2H2-type zinc fingers span residues 34–56 (FPCQLCDKAFNSVEKLKVHSYSH), 62–86 (YKCTQQDCTKAFVSKYKLLRHMATH), 92–114 (HKCNYCEKMFHRKDHLKNHLHTH), 121–143 (FKCEECGKNYNTKLGFKRHLALH), 150–172 (LTCKVCLQTFESTGVLLEHLKTH), 185–207 (HQCEHCDRRFYTRKDVRRHMVVH), and 213–236 (FLCQYCAQRFGRKDHLTRHMKKSH). Low complexity-rich tracts occupy residues 366–380 (SGMPSSSQDSQASSS) and 455–467 (TQLPPQTQDPQDP). Disordered regions lie at residues 366-406 (SGMP…GSVP) and 447-474 (QEEAHSSMTQLPPQTQDPQDPSNSIGLG).

This sequence belongs to the krueppel C2H2-type zinc-finger protein family. Expressed in nephroblastoma.

It is found in the nucleus. Functionally, transcription factor and proto-oncogene whose activation results in up-regulation of target genes, such as IGFII, leading to uncontrolled cell proliferation. The chain is Zinc finger protein PLAG1 (PLAG1) from Gallus gallus (Chicken).